The sequence spans 478 residues: Cytochrome P450 monooxygenase ATR3 (478 aa).

Residues 20 to 42 (AVAFVTASALYYVLPAAISHIQL) form a helical membrane-spanning segment. Asn159 and Asn268 each carry an N-linked (GlcNAc...) asparagine glycan.

It belongs to the cytochrome P450 family. Heme is required as a cofactor.

It localises to the membrane. It participates in mycotoxin biosynthesis. Functionally, cytochrome P450 monooxygenase; part of the core atranone cluster (CAC) which products are predicted to catalyze most or all steps of mycotoxin atranone synthesis, starting from geranylgeranyl pyrophosphate (GGPP). The initial cyclization of GGPP to dolabellane is probably performed by the terpene cyclase ATR13. The Baeyer-Villiger oxidation near the end of the atranone synthesis, which converts atranones D and E to atranones F and G is predicted to be catalyzed by the monooxygenase ATR8. Of the CAC's other predicted gene products, the reducing PKS ATR6 might synthesize a polyketide chain. This polyketide is probably transferred onto the atranone backbone by the polyketide transferase ATR5. Other predicted CAC products include 4 oxygenases (ATR2, ATR3, ATR4, and ATR14), 3 short-chain reductases (ATR7, ATR9, and ATR10), and a methyltransferase (ATR12). These may all be involved in the various steps of atranone biosynthesis, although their specific roles must await experimental determination. The polypeptide is Cytochrome P450 monooxygenase ATR3 (Stachybotrys chlorohalonatus (strain IBT 40285)).